A 664-amino-acid polypeptide reads, in one-letter code: Protein fem-1 homolog CG6966 (664 aa).

ANK repeat units follow at residues 40–70 (NGAT…NVEQ), 82–111 (EDAP…NVNS), 115–144 (TNST…DFEV), 148–177 (HGHT…DVNR), 181–210 (KGNT…TMDV), and 213–242 (YGMT…VSRE). TPR repeat units follow at residues 245–279 (IHAL…RAVE) and 335–368 (SYYI…QQKI). A disordered region spans residues 433 to 460 (QQKDQQHPQKQLPAADKSPSCSASSSAS). A compositionally biased stretch (low complexity) spans 450–460 (SPSCSASSSAS). 2 ANK repeats span residues 529–571 (FDRT…DPNA) and 575–605 (AGNT…HLDT).

Belongs to the fem-1 family. As to quaternary structure, component of a CRL2 E3 ubiquitin-protein ligase complex, also named ECS (Elongin BC-CUL2/5-SOCS-box protein) complex.

It participates in protein modification; protein ubiquitination. Functionally, substrate-recognition component of a Cul2-RING (CRL2) E3 ubiquitin-protein ligase complex of the DesCEND (destruction via C-end degrons) pathway, which recognizes a C-degron located at the extreme C terminus of target proteins, leading to their ubiquitination and degradation. The C-degron recognized by the DesCEND pathway is usually a motif of less than ten residues and can be present in full-length proteins, truncated proteins or proteolytically cleaved forms. This chain is Protein fem-1 homolog CG6966, found in Drosophila melanogaster (Fruit fly).